Here is a 37-residue protein sequence, read N- to C-terminus: Large ribosomal subunit protein bL36 (37 aa).

Belongs to the bacterial ribosomal protein bL36 family.

The sequence is that of Large ribosomal subunit protein bL36 from Solidesulfovibrio magneticus (strain ATCC 700980 / DSM 13731 / RS-1) (Desulfovibrio magneticus).